Reading from the N-terminus, the 107-residue chain is uncharacterized protein (107 aa).

The segment at 1-32 (MDSLASGRWRRRRTEELPAAGDAKRACRRSEP) is disordered. Residues 22–31 (DAKRACRRSE) are compositionally biased toward basic and acidic residues.

This is an uncharacterized protein from Mus musculus (Mouse).